Consider the following 97-residue polypeptide: Large ribosomal subunit protein bL31 (97 aa).

A disordered region spans residues 75–97 (NKTKKSNQAKVEKQTRHRSINEL). The segment covering 84–97 (KVEKQTRHRSINEL) has biased composition (basic and acidic residues).

The protein belongs to the bacterial ribosomal protein bL31 family. Type A subfamily. Part of the 50S ribosomal subunit.

Its function is as follows. Binds the 23S rRNA. This chain is Large ribosomal subunit protein bL31, found in Mycoplasma genitalium (strain ATCC 33530 / DSM 19775 / NCTC 10195 / G37) (Mycoplasmoides genitalium).